We begin with the raw amino-acid sequence, 390 residues long: Lipid-A-disaccharide synthase (390 aa).

Belongs to the LpxB family.

It catalyses the reaction a lipid X + a UDP-2-N,3-O-bis[(3R)-3-hydroxyacyl]-alpha-D-glucosamine = a lipid A disaccharide + UDP + H(+). The protein operates within bacterial outer membrane biogenesis; LPS lipid A biosynthesis. Its function is as follows. Condensation of UDP-2,3-diacylglucosamine and 2,3-diacylglucosamine-1-phosphate to form lipid A disaccharide, a precursor of lipid A, a phosphorylated glycolipid that anchors the lipopolysaccharide to the outer membrane of the cell. In Paramagnetospirillum magneticum (strain ATCC 700264 / AMB-1) (Magnetospirillum magneticum), this protein is Lipid-A-disaccharide synthase.